The following is a 608-amino-acid chain: Dolichyl-diphosphooligosaccharide--protein glycosyltransferase subunit 1 (608 aa).

The signal sequence occupies residues 1–24 (MEAPAVCLLPLLLLLWAWAPAPGR). The Lumenal segment spans residues 25 to 435 (ASPEALPLVN…VVHYTFNKVL (411 aa)). Lys188 carries the N6-acetyllysine modification. The N-linked (GlcNAc...) asparagine glycan is linked to Asn300. The chain crosses the membrane as a helical span at residues 436-456 (MLQEPLLVVAAFYILFFTVIV). Residues 457–607 (YVRLDFSITK…VTKIDHILDA (151 aa)) lie on the Cytoplasmic side of the membrane. Lys539 is modified (N6-acetyllysine; alternate). Lys539 participates in a covalent cross-link: Glycyl lysine isopeptide (Lys-Gly) (interchain with G-Cter in SUMO2); alternate.

The protein belongs to the OST1 family. Component of the oligosaccharyltransferase (OST) complex. OST exists in two different complex forms which contain common core subunits RPN1, RPN2, OST48, OST4, DAD1 and TMEM258, either STT3A or STT3B as catalytic subunits, and form-specific accessory subunits. STT3A complex assembly occurs through the formation of 3 subcomplexes. Subcomplex 1 contains RPN1 and TMEM258, subcomplex 2 contains the STT3A-specific subunits STT3A, DC2/OSTC, and KCP2 as well as the core subunit OST4, and subcomplex 3 contains RPN2, DAD1, and OST48. The STT3A complex can form stable complexes with the Sec61 complex or with both the Sec61 and TRAP complexes. Interacts with TMEM35A/NACHO. Post-translationally, ubiquitinated by the ECS(ASB11) complex. In terms of processing, ufmylated by UFL1 in response to endoplasmic reticulum stress, promoting reticulophagy of endoplasmic reticulum sheets. In terms of tissue distribution, detected in liver (at protein level).

The protein resides in the endoplasmic reticulum membrane. Its pathway is protein modification; protein glycosylation. Subunit of the oligosaccharyl transferase (OST) complex that catalyzes the initial transfer of a defined glycan (Glc(3)Man(9)GlcNAc(2) in eukaryotes) from the lipid carrier dolichol-pyrophosphate to an asparagine residue within an Asn-X-Ser/Thr consensus motif in nascent polypeptide chains, the first step in protein N-glycosylation. N-glycosylation occurs cotranslationally and the complex associates with the Sec61 complex at the channel-forming translocon complex that mediates protein translocation across the endoplasmic reticulum (ER). All subunits are required for a maximal enzyme activity. The sequence is that of Dolichyl-diphosphooligosaccharide--protein glycosyltransferase subunit 1 from Sus scrofa (Pig).